The following is a 513-amino-acid chain: Probable lipid II flippase MurJ (513 aa).

Helical transmembrane passes span 3–23, 25–45, 83–103, 133–153, 162–182, 186–206, 221–241, 245–265, 271–291, 313–333, 354–374, 382–402, 405–425, 441–461, and 481–501; these read ILKSLISLSLITFISRILGFM, DLLIAYSFGASGITDAFFLAF, FISNILGLMIIILSLFTAFGI, IMFPYIFFVSLGSLTGSILNA, YSSIFLNLSMIMFISFVTAYF, ILSLAWAVIVGGVFQILYQFP, ILNLGVLKFLKQIGIVALGMS, VSIIIATISSSFLISGSISWI, LVEFISGIFGVSLSTILLPLL, LVCILVIPSIIILFTLSESLI, IEFYSIGLLPFVLIKILLAGF, TPMKISIFILVLTQLMNIFFI, FQYTSFALAISLASWINFFLL, WLRFLLKIFAAAMVMLILLFI, and LFYICASSGGGYLFTLFCLGL.

Belongs to the MurJ/MviN family.

The protein localises to the cell inner membrane. It participates in cell wall biogenesis; peptidoglycan biosynthesis. Functionally, involved in peptidoglycan biosynthesis. Transports lipid-linked peptidoglycan precursors from the inner to the outer leaflet of the cytoplasmic membrane. The polypeptide is Probable lipid II flippase MurJ (Buchnera aphidicola subsp. Baizongia pistaciae (strain Bp)).